The sequence spans 1076 residues: Protein EXPORTIN 1B (1076 aa).

The Importin N-terminal domain occupies A37–Q103. 11 HEAT repeats span residues A135–D171, I232–G267, M282–S319, D475–V514, K564–R601, P613–D650, L683–D720, R757–R794, A799–E836, E895–D935, and K943–K988.

Belongs to the exportin family. Present in mature pollen grains, unpollinated pistils, and 2-week-old seedlings.

Its subcellular location is the nucleus. The protein localises to the nuclear pore complex. It is found in the nucleus membrane. Receptor for the leucine-rich nuclear export signal (NES). Binds cooperatively to the NES on its target protein and to the small GTPase Ran in its active GTP-bound form. Required for the maternal-to-embryonic transition and during gametophyte development. The polypeptide is Protein EXPORTIN 1B (Arabidopsis thaliana (Mouse-ear cress)).